Reading from the N-terminus, the 47-residue chain is Large ribosomal subunit protein eL40 (47 aa).

Belongs to the eukaryotic ribosomal protein eL40 family.

The protein is Large ribosomal subunit protein eL40 of Methanococcus maripaludis (strain C5 / ATCC BAA-1333).